The sequence spans 304 residues: Phosphoribosylaminoimidazole-succinocarboxamide synthase (304 aa).

It belongs to the SAICAR synthetase family.

It catalyses the reaction 5-amino-1-(5-phospho-D-ribosyl)imidazole-4-carboxylate + L-aspartate + ATP = (2S)-2-[5-amino-1-(5-phospho-beta-D-ribosyl)imidazole-4-carboxamido]succinate + ADP + phosphate + 2 H(+). Its pathway is purine metabolism; IMP biosynthesis via de novo pathway; 5-amino-1-(5-phospho-D-ribosyl)imidazole-4-carboxamide from 5-amino-1-(5-phospho-D-ribosyl)imidazole-4-carboxylate: step 1/2. This is Phosphoribosylaminoimidazole-succinocarboxamide synthase from Corynebacterium efficiens (strain DSM 44549 / YS-314 / AJ 12310 / JCM 11189 / NBRC 100395).